A 117-amino-acid polypeptide reads, in one-letter code: Large ribosomal subunit protein uL18 (117 aa).

This sequence belongs to the universal ribosomal protein uL18 family. As to quaternary structure, part of the 50S ribosomal subunit; part of the 5S rRNA/L5/L18/L25 subcomplex. Contacts the 5S and 23S rRNAs.

In terms of biological role, this is one of the proteins that bind and probably mediate the attachment of the 5S RNA into the large ribosomal subunit, where it forms part of the central protuberance. The sequence is that of Large ribosomal subunit protein uL18 from Yersinia pseudotuberculosis serotype O:1b (strain IP 31758).